The chain runs to 156 residues: Large ribosomal subunit protein eL24 (156 aa).

Residues 110-129 (KESKAKKQETQAAKKAEKAK) are compositionally biased toward basic and acidic residues. The disordered stretch occupies residues 110-156 (KESKAKKQETQAAKKAEKAKNAANPKARVTSKQGAKGAPVKVAAKSR). The segment covering 130–156 (NAANPKARVTSKQGAKGAPVKVAAKSR) has biased composition (low complexity).

This sequence belongs to the eukaryotic ribosomal protein eL24 family. As to quaternary structure, component of the large ribosomal subunit (LSU). Mature N.crassa ribosomes consist of a small (40S) and a large (60S) subunit. The 40S small subunit contains 1 molecule of ribosomal RNA (18S rRNA) and at least 32 different proteins. The large 60S subunit contains 3 rRNA molecules (26S, 5.8S and 5S rRNA) and at least 42 different proteins.

It is found in the cytoplasm. In terms of biological role, component of the ribosome, a large ribonucleoprotein complex responsible for the synthesis of proteins in the cell. The small ribosomal subunit (SSU) binds messenger RNAs (mRNAs) and translates the encoded message by selecting cognate aminoacyl-transfer RNA (tRNA) molecules. The large subunit (LSU) contains the ribosomal catalytic site termed the peptidyl transferase center (PTC), which catalyzes the formation of peptide bonds, thereby polymerizing the amino acids delivered by tRNAs into a polypeptide chain. The nascent polypeptides leave the ribosome through a tunnel in the LSU and interact with protein factors that function in enzymatic processing, targeting, and the membrane insertion of nascent chains at the exit of the ribosomal tunnel. This Neurospora crassa (strain ATCC 24698 / 74-OR23-1A / CBS 708.71 / DSM 1257 / FGSC 987) protein is Large ribosomal subunit protein eL24 (rpl-24).